The sequence spans 224 residues: Flagellar L-ring protein (224 aa).

Positions Met-1–Gly-15 are cleaved as a signal peptide. Cys-16 carries N-palmitoyl cysteine lipidation. Cys-16 carries S-diacylglycerol cysteine lipidation.

This sequence belongs to the FlgH family. The basal body constitutes a major portion of the flagellar organelle and consists of four rings (L,P,S, and M) mounted on a central rod.

Its subcellular location is the cell outer membrane. It is found in the bacterial flagellum basal body. Functionally, assembles around the rod to form the L-ring and probably protects the motor/basal body from shearing forces during rotation. The chain is Flagellar L-ring protein from Idiomarina loihiensis (strain ATCC BAA-735 / DSM 15497 / L2-TR).